The sequence spans 189 residues: Xanthine phosphoribosyltransferase (189 aa).

Leu20 and Asn27 together coordinate xanthine. 128–132 serves as a coordination point for 5-phospho-alpha-D-ribose 1-diphosphate; that stretch reads ANGEA. Lys156 contacts xanthine.

The protein belongs to the purine/pyrimidine phosphoribosyltransferase family. Xpt subfamily. Homodimer.

It is found in the cytoplasm. The catalysed reaction is XMP + diphosphate = xanthine + 5-phospho-alpha-D-ribose 1-diphosphate. The protein operates within purine metabolism; XMP biosynthesis via salvage pathway; XMP from xanthine: step 1/1. Converts the preformed base xanthine, a product of nucleic acid breakdown, to xanthosine 5'-monophosphate (XMP), so it can be reused for RNA or DNA synthesis. The sequence is that of Xanthine phosphoribosyltransferase from Lactobacillus delbrueckii subsp. bulgaricus (strain ATCC 11842 / DSM 20081 / BCRC 10696 / JCM 1002 / NBRC 13953 / NCIMB 11778 / NCTC 12712 / WDCM 00102 / Lb 14).